Here is a 734-residue protein sequence, read N- to C-terminus: Photosystem I P700 chlorophyll a apoprotein A2 (734 aa).

The next 8 helical transmembrane spans lie at 46–69 (IFAS…FHVA), 135–158 (LYTG…LHLQ), 175–199 (LNHH…HVAI), 273–291 (IAHH…GHMY), 330–353 (IHFQ…QHMY), 369–395 (AALY…IFFI), 417–439 (AIIS…LYVH), and 517–535 (FLVH…LILV). [4Fe-4S] cluster-binding residues include Cys559 and Cys568. The next 2 membrane-spanning stretches (helical) occupy residues 575–596 (AFYL…YWHW) and 643–665 (LSVW…MFLI). 3 residues coordinate chlorophyll a: His654, Met662, and Tyr670. Residue Trp671 participates in phylloquinone binding. A helical membrane pass occupies residues 707 to 727 (LVGLAHFSVGYIFTYAAFLIA).

It belongs to the PsaA/PsaB family. As to quaternary structure, the PsaA/B heterodimer binds the P700 chlorophyll special pair and subsequent electron acceptors. PSI consists of a core antenna complex that captures photons, and an electron transfer chain that converts photonic excitation into a charge separation. The eukaryotic PSI reaction center is composed of at least 11 subunits. It depends on P700 is a chlorophyll a/chlorophyll a' dimer, A0 is one or more chlorophyll a, A1 is one or both phylloquinones and FX is a shared 4Fe-4S iron-sulfur center. as a cofactor.

The protein resides in the plastid. The protein localises to the chloroplast thylakoid membrane. It carries out the reaction reduced [plastocyanin] + hnu + oxidized [2Fe-2S]-[ferredoxin] = oxidized [plastocyanin] + reduced [2Fe-2S]-[ferredoxin]. In terms of biological role, psaA and PsaB bind P700, the primary electron donor of photosystem I (PSI), as well as the electron acceptors A0, A1 and FX. PSI is a plastocyanin-ferredoxin oxidoreductase, converting photonic excitation into a charge separation, which transfers an electron from the donor P700 chlorophyll pair to the spectroscopically characterized acceptors A0, A1, FX, FA and FB in turn. Oxidized P700 is reduced on the lumenal side of the thylakoid membrane by plastocyanin. This Oryza sativa (Rice) protein is Photosystem I P700 chlorophyll a apoprotein A2.